The primary structure comprises 424 residues: Glycerol-3-phosphate dehydrogenase [NAD(+)] (424 aa).

NAD(+) contacts are provided by residues 79-84 (GSGNWG), Phe111, and Phe167. Residue Lys190 coordinates substrate. Position 223 (Ala223) interacts with NAD(+). The Proton acceptor role is filled by Lys283. The NAD(+) site is built by Arg348 and Gln377. 348-349 (RN) lines the substrate pocket.

The protein belongs to the NAD-dependent glycerol-3-phosphate dehydrogenase family.

The enzyme catalyses sn-glycerol 3-phosphate + NAD(+) = dihydroxyacetone phosphate + NADH + H(+). This is Glycerol-3-phosphate dehydrogenase [NAD(+)] (GPD) from Eremothecium gossypii (strain ATCC 10895 / CBS 109.51 / FGSC 9923 / NRRL Y-1056) (Yeast).